The chain runs to 215 residues: Urease accessory protein UreG 2 (215 aa).

11-18 lines the GTP pocket; that stretch reads GPVGSGKT.

This sequence belongs to the SIMIBI class G3E GTPase family. UreG subfamily. Homodimer. UreD, UreF and UreG form a complex that acts as a GTP-hydrolysis-dependent molecular chaperone, activating the urease apoprotein by helping to assemble the nickel containing metallocenter of UreC. The UreE protein probably delivers the nickel.

It is found in the cytoplasm. In terms of biological role, facilitates the functional incorporation of the urease nickel metallocenter. This process requires GTP hydrolysis, probably effectuated by UreG. In Methylorubrum extorquens (strain PA1) (Methylobacterium extorquens), this protein is Urease accessory protein UreG 2.